A 723-amino-acid chain; its full sequence is ESX-1 secretion-associated protein EspK (723 aa).

2 disordered regions span residues 175–360 (DLLQ…TPAA) and 393–451 (SGAG…GTPV). Over residues 200-209 (TPGTPITPGT) the composition is skewed to low complexity. The span at 210–229 (PITPIPGAPVTPITPTPGTP) shows a compositional bias: pro residues. Positions 230-249 (VTPVTPGKPVTPVTPVKPGT) are enriched in low complexity. Pro residues-rich tracts occupy residues 250-265 (PGEPTPITPVTPPVAP) and 274-308 (PVTPAPAPHPQPAPAPAPSPGPQPVTPATPGPSGP). Composition is skewed to low complexity over residues 309-319 (ATPGTPGGEPA), 393-404 (SGAGSHAATGRA), and 412-426 (AAAPSTRAASARTAP). The span at 432–444 (STDHIDKPDRSES) shows a compositional bias: basic and acidic residues.

It localises to the cytoplasm. Functionally, may act as a chaperone that facilitates EspB secretion through an interaction with EccCb1. The polypeptide is ESX-1 secretion-associated protein EspK (Mycobacterium tuberculosis (strain CDC 1551 / Oshkosh)).